A 294-amino-acid chain; its full sequence is Fructose-bisphosphate aldolase class 1 (294 aa).

Glu-176 (proton acceptor) is an active-site residue. Catalysis depends on Lys-213, which acts as the Schiff-base intermediate with dihydroxyacetone-P.

Belongs to the class I fructose-bisphosphate aldolase family.

The enzyme catalyses beta-D-fructose 1,6-bisphosphate = D-glyceraldehyde 3-phosphate + dihydroxyacetone phosphate. It participates in carbohydrate degradation; glycolysis; D-glyceraldehyde 3-phosphate and glycerone phosphate from D-glucose: step 4/4. This Oceanobacillus iheyensis (strain DSM 14371 / CIP 107618 / JCM 11309 / KCTC 3954 / HTE831) protein is Fructose-bisphosphate aldolase class 1.